A 159-amino-acid polypeptide reads, in one-letter code: 3-hydroxyacyl-[acyl-carrier-protein] dehydratase FabZ (159 aa).

The active site involves His65.

Belongs to the thioester dehydratase family. FabZ subfamily.

The protein resides in the cytoplasm. The enzyme catalyses a (3R)-hydroxyacyl-[ACP] = a (2E)-enoyl-[ACP] + H2O. Involved in unsaturated fatty acids biosynthesis. Catalyzes the dehydration of short chain beta-hydroxyacyl-ACPs and long chain saturated and unsaturated beta-hydroxyacyl-ACPs. The polypeptide is 3-hydroxyacyl-[acyl-carrier-protein] dehydratase FabZ (Microcystis aeruginosa (strain NIES-843 / IAM M-2473)).